A 516-amino-acid chain; its full sequence is Zinc finger protein 83 (516 aa).

The segment at 1 to 20 (MHGRKDDAQKQPVKNQLGLN) is disordered. The C2H2-type 1; degenerate zinc finger occupies 93 to 115 (YKCSERGKAFHQGLHFTIHQIIH). 14 consecutive C2H2-type zinc fingers follow at residues 121-143 (FKCDICGKIFNKKSNLASHQRIH), 149-171 (YKCNECGKVFHNMSHLAQHRRIH), 177-199 (YKCNECGKVFNQISHLAQHQRIH), 205-227 (YKCNECGKVFHQISHLAQHRTIH), 233-255 (YECNKCGKVFSRNSYLVQHLIIH), 261-283 (YRCNVCGKVFHHISHLAQHQRIH), 289-311 (YKCNECGKVFSHKSSLVNHWRIH), 317-339 (YKCNECGKVFSHKSSLVNHWRIH), 345-367 (YKCNECGKVFSRNSYLAQHLIIH), 373-395 (YKCDECDKAFSQNSHLVQHHRIH), 401-423 (YKCDECGKVFSQNSYLAYHWRIH), 429-451 (YKCNECGKVFGLNSSLAHHRKIH), 457-479 (FKCNECGKAFSMRSSLTNHHAIH), and 485-507 (FKCNECGKLFRDNSYLVRHQRFH).

Belongs to the krueppel C2H2-type zinc-finger protein family.

The protein localises to the nucleus. In terms of biological role, may be involved in transcriptional regulation. This chain is Zinc finger protein 83 (ZNF83), found in Homo sapiens (Human).